Reading from the N-terminus, the 121-residue chain is Large ribosomal subunit protein uL18 (121 aa).

This sequence belongs to the universal ribosomal protein uL18 family. As to quaternary structure, part of the 50S ribosomal subunit; part of the 5S rRNA/L5/L18/L25 subcomplex. Contacts the 5S and 23S rRNAs.

In terms of biological role, this is one of the proteins that bind and probably mediate the attachment of the 5S RNA into the large ribosomal subunit, where it forms part of the central protuberance. The polypeptide is Large ribosomal subunit protein uL18 (Thermoanaerobacter pseudethanolicus (strain ATCC 33223 / 39E) (Clostridium thermohydrosulfuricum)).